The primary structure comprises 507 residues: Archaeal-type glutamate synthase [NADPH] (507 aa).

2 4Fe-4S ferredoxin-type domains span residues 10 to 39 and 41 to 70; these read FVVE…YDEN and NRVY…VRKN. Cysteine 19, cysteine 22, cysteine 25, cysteine 29, cysteine 50, cysteine 53, cysteine 56, and cysteine 60 together coordinate [4Fe-4S] cluster.

It belongs to the glutamate synthase family. FMN serves as cofactor.

It carries out the reaction 2 L-glutamate + NADP(+) = L-glutamine + 2-oxoglutarate + NADPH + H(+). This chain is Archaeal-type glutamate synthase [NADPH], found in Thermotoga maritima (strain ATCC 43589 / DSM 3109 / JCM 10099 / NBRC 100826 / MSB8).